We begin with the raw amino-acid sequence, 212 residues long: HTH-type transcriptional repressor NicS (212 aa).

The HTH tetR-type domain occupies 14 to 74 (DRTRDNILKA…SVLEHIYASF (61 aa)). A DNA-binding region (H-T-H motif) is located at residues 37-56 (RIEQISTLAKSNDRMIYYYF).

It participates in cofactor degradation; nicotinate degradation [regulation]. Transcriptional repressor for the nicAB operon, encoding the upper aerobic nicotinate degradation pathway. Acts under non-induced conditions: repression of the nicAB operon becomes alleviated in presence of either nicotinate or 6-hydroxynicotinate (6HNA). The chain is HTH-type transcriptional repressor NicS (nicS) from Pseudomonas putida (strain ATCC 47054 / DSM 6125 / CFBP 8728 / NCIMB 11950 / KT2440).